Reading from the N-terminus, the 103-residue chain is Large ribosomal subunit protein uL24 (103 aa).

The protein belongs to the universal ribosomal protein uL24 family. As to quaternary structure, part of the 50S ribosomal subunit.

In terms of biological role, one of two assembly initiator proteins, it binds directly to the 5'-end of the 23S rRNA, where it nucleates assembly of the 50S subunit. Its function is as follows. One of the proteins that surrounds the polypeptide exit tunnel on the outside of the subunit. The sequence is that of Large ribosomal subunit protein uL24 from Vesicomyosocius okutanii subsp. Calyptogena okutanii (strain HA).